Consider the following 83-residue polypeptide: Neurotoxin LmNaTx3 (83 aa).

The N-terminal stretch at M1–S21 is a signal peptide. In terms of domain architecture, LCN-type CS-alpha/beta spans K22–C83. Disulfide bonds link C32/C83, C36/C59, C45/C64, and C49/C66.

Belongs to the long (4 C-C) scorpion toxin superfamily. Sodium channel inhibitor family. Alpha subfamily. Expressed by the venom gland.

The protein resides in the secreted. Its function is as follows. Binds voltage-independently at site-3 of voltage-gated sodium channels (Nav) and inhibits the inactivation of the activated channels, thereby blocking neuronal transmission. The protein is Neurotoxin LmNaTx3 of Lychas mucronatus (Chinese swimming scorpion).